Here is a 118-residue protein sequence, read N- to C-terminus: Large ribosomal subunit protein bL20 (118 aa).

Belongs to the bacterial ribosomal protein bL20 family.

Its function is as follows. Binds directly to 23S ribosomal RNA and is necessary for the in vitro assembly process of the 50S ribosomal subunit. It is not involved in the protein synthesizing functions of that subunit. This chain is Large ribosomal subunit protein bL20, found in Thermotoga neapolitana (strain ATCC 49049 / DSM 4359 / NBRC 107923 / NS-E).